The following is a 156-amino-acid chain: Small ribosomal subunit protein uS7 (156 aa).

The protein belongs to the universal ribosomal protein uS7 family. Part of the 30S ribosomal subunit. Contacts proteins S9 and S11.

Its function is as follows. One of the primary rRNA binding proteins, it binds directly to 16S rRNA where it nucleates assembly of the head domain of the 30S subunit. Is located at the subunit interface close to the decoding center, probably blocks exit of the E-site tRNA. This is Small ribosomal subunit protein uS7 from Solidesulfovibrio magneticus (strain ATCC 700980 / DSM 13731 / RS-1) (Desulfovibrio magneticus).